The following is a 982-amino-acid chain: Hunchback-like protein (982 aa).

The interval 87–194 (QPGEKIHPDG…SNYQVTSEPV (108 aa)) is disordered. The span at 101 to 110 (PKEDGRKSSE) shows a compositional bias: basic and acidic residues. The segment covering 111–132 (HTNSYDVSASQSPSNDGAQSDS) has biased composition (polar residues). Residues 142–152 (CMTETEMDTDE) show a composition bias toward acidic residues. Residues 153 to 175 (KDSTIKPEDQATPKLEEGSDSKP) show a composition bias toward basic and acidic residues. A compositionally biased stretch (polar residues) spans 176-193 (ESTSVEGTSSNYQVTSEP). C2H2-type zinc fingers lie at residues 336-358 (LVCP…MNTH), 361-384 (HQCS…RESH), 538-560 (FKCK…ARTH), 567-589 (LNCQ…YRNH), 595-617 (FQCK…MKSH), 623-647 (FRCM…KYNH), and 734-756 (LKCS…SMSH). Positions 377–415 (KKHMRESHTVEEQLRAGFESEPAKESASSPKNLSLSKDG) are disordered. Positions 811-896 (EEMDQGSDSA…PPLHSSSIVA (86 aa)) are disordered. Composition is skewed to polar residues over residues 816–831 (GSDS…QISS) and 843–862 (SLEQ…SNDS). Positions 863-875 (AMEKDGESADDAP) are enriched in basic and acidic residues. C2H2-type zinc fingers lie at residues 929–951 (FYCD…MRFH) and 957–981 (FMCS…QARH).

Belongs to the hunchback C2H2-type zinc-finger protein family. Expressed primarily in ectodermal cells during embryonic and larval development.

The protein resides in the nucleus. Functionally, required for the late stages of development. Plays a role in the developmental timing of postembryonic hypodermal seam cell fusion events and adult alae production. The sequence is that of Hunchback-like protein from Caenorhabditis elegans.